We begin with the raw amino-acid sequence, 62 residues long: Large ribosomal subunit protein bL28 (62 aa).

This sequence belongs to the bacterial ribosomal protein bL28 family.

This Helicobacter hepaticus (strain ATCC 51449 / 3B1) protein is Large ribosomal subunit protein bL28.